The sequence spans 304 residues: Glutaminase (304 aa).

7 residues coordinate substrate: serine 63, asparagine 114, glutamate 158, asparagine 165, tyrosine 189, tyrosine 240, and valine 258.

This sequence belongs to the glutaminase family. In terms of assembly, homotetramer.

It catalyses the reaction L-glutamine + H2O = L-glutamate + NH4(+). In Shewanella baltica (strain OS195), this protein is Glutaminase.